Reading from the N-terminus, the 350-residue chain is Histidinol-phosphate aminotransferase 1 (350 aa).

At Lys209 the chain carries N6-(pyridoxal phosphate)lysine.

Belongs to the class-II pyridoxal-phosphate-dependent aminotransferase family. Histidinol-phosphate aminotransferase subfamily. Homodimer. Pyridoxal 5'-phosphate is required as a cofactor.

The enzyme catalyses L-histidinol phosphate + 2-oxoglutarate = 3-(imidazol-4-yl)-2-oxopropyl phosphate + L-glutamate. It participates in amino-acid biosynthesis; L-histidine biosynthesis; L-histidine from 5-phospho-alpha-D-ribose 1-diphosphate: step 7/9. The polypeptide is Histidinol-phosphate aminotransferase 1 (hisC1) (Bradyrhizobium diazoefficiens (strain JCM 10833 / BCRC 13528 / IAM 13628 / NBRC 14792 / USDA 110)).